We begin with the raw amino-acid sequence, 493 residues long: MDASAEQSLPEPGSQDSVAGDDIEIVVNVGGVRQVLYGDLLSQYPETRLAELINCLAGGYDTIFSLCDDYDPGKREFYFDRDPDAFKCVIEVYYFGEVHMKKGICPICFKNEMDFWKVDLKFLDDCCKSHLSEKREELEEIARRVQLILDDLGVDAAEGRWRRCQKCVWKFLEKPESSCPARVVAVLSFLLILVSSVVMCMGTIPELQVVDSEGNRVEHPTLENVETACIGWFTLEYLLRLFSSPNKLHFALSFMNIVDVLAILPFYVSLTLTHLGARMMELTNVQQAVQALRIMRIARIFKLARHSSGLQTLTYALKRSFKELGLLLMYLAVGIFVFSALGYTMEQSHPETLFKSIPQSFWWAIITMTTVGYGDIYPKTTLGKLNAAISFLCGVIAIALPIHPIINNFVRYYNKQRVLETAAKHELELMELNSSSAESKPGGSRSDLDTLPPEPAAREGPSWGSRLKLSHSDTFIPLLTEEKHHRTRLQSCK.

Residues 1–183 (MDASAEQSLP…KPESSCPARV (183 aa)) are Cytoplasmic-facing. A helical transmembrane segment spans residues 184 to 204 (VAVLSFLLILVSSVVMCMGTI). Over 205 to 223 (PELQVVDSEGNRVEHPTLE) the chain is Extracellular. Residues 224-244 (NVETACIGWFTLEYLLRLFSS) traverse the membrane as a helical segment. At 245–249 (PNKLH) the chain is on the cytoplasmic side. A helical membrane pass occupies residues 250–270 (FALSFMNIVDVLAILPFYVSL). Over 271–289 (TLTHLGARMMELTNVQQAV) the chain is Extracellular. A helical; Voltage-sensor transmembrane segment spans residues 290–310 (QALRIMRIARIFKLARHSSGL). The Cytoplasmic portion of the chain corresponds to 311–324 (QTLTYALKRSFKEL). Residues 325–345 (GLLLMYLAVGIFVFSALGYTM) form a helical membrane-spanning segment. Residues 346 to 357 (EQSHPETLFKSI) lie on the Extracellular side of the membrane. An intramembrane region (pore-forming) is located at residues 358–378 (PQSFWWAIITMTTVGYGDIYP). The short motif at 370–375 (TVGYGD) is the Selectivity filter element. At 379–385 (KTTLGKL) the chain is on the extracellular side. Residues 386-406 (NAAISFLCGVIAIALPIHPII) traverse the membrane as a helical segment. Residues 407–493 (NNFVRYYNKQ…HHRTRLQSCK (87 aa)) are Cytoplasmic-facing. The interval 433–468 (NSSSAESKPGGSRSDLDTLPPEPAAREGPSWGSRLK) is disordered.

The protein belongs to the potassium channel family. F (TC 1.A.1.2) subfamily. Kv5.1/KCNF1 sub-subfamily. As to quaternary structure, heterotetramer with KCNB1 or KCNB2. In terms of tissue distribution, expressed in brain namely in the piriform cortex, olfactory tubercle, and medial habenular nucleus. Also expressed in the medial amygdaloid nuclei and the lateral amygdaloid area.

The protein resides in the cell membrane. Functionally, regulatory alpha-subunit of the voltage-gated potassium (Kv) channel which, when coassembled with KCNB1 or KCNB2, can modulate their expression and their gating kinetics by acting on deactivation upon repolarization and inactivation during maintained depolarization. Accelerates inactivation but has relatively little effect on deactivation. Coexpression with KCNB1 or KCNB2 markedly slows inactivation. Each modulatory subunit has its own specific properties of regulation, and can lead to extensive inhibitions, to large changes in kinetics, and/or to large shifts in the voltage dependencies of the inactivation process. The gating kinetics depends on the nature and stoichiometry of the associated regulatory sunbunit. Fails to produce a potassium current when expressed alone. The polypeptide is Voltage-gated potassium channel regulatory subunit KCNF1 (Rattus norvegicus (Rat)).